The chain runs to 576 residues: FtsZ-localized protein C (576 aa).

As to quaternary structure, interacts with FtsZ filaments.

The protein localises to the cytoplasm. The protein resides in the cell inner membrane. In terms of biological role, membrane anchor for FtsZ. Binds and recruits FtsZ polymers to membranes early in the cell cycle. May also improve the efficiency of cytokinesis through the regulation of cell wall hydrolysis. This chain is FtsZ-localized protein C, found in Caulobacter vibrioides (strain NA1000 / CB15N) (Caulobacter crescentus).